The following is a 102-amino-acid chain: Protein PAPPAS (102 aa).

2 consecutive transmembrane segments (helical) span residues 13 to 33 (LFLT…FVKW) and 82 to 102 (IGSD…FFFF).

As to expression, expressed in placenta with lower expression in brain, kidney and testis.

The protein localises to the endoplasmic reticulum membrane. The polypeptide is Protein PAPPAS (PAPPA-AS1) (Homo sapiens (Human)).